The chain runs to 551 residues: MSSGTENDQFYSFDESDSSSIELYESHNTSEFTIHGLVFPKLISVTSQDSEFDINEDEDGVDTIYEGMLDAPLTKNNKRILCEGSVPNLSYECLTTKGIFERMLQRVDHLQPIFAIPSADILILLQHYDWNEERLLEVWTEKMDELLVELGLSTTANIKKDNDYNSHFREVEFKNDFTCIICCDKKDTETFALECGHEYCINCYRHYIKDKLHEGNIITCMDCSLALKNEDIDKVMGHPSSSKLMDSSIKSFVQKHNRNYKWCPFADCKSIVHLRDTSSLPEYTRLHYSPFVKCNSFHRFCFNCGFEVHSPADCKITTAWVKKARKESEILNWVLSHTKECPKCSVNIEKNGGCNHMVCSSCKYEFCWICEGPWAPHGKNFFQCTMYKNNEDNKSKNPQDANKTLKKYTFYYRLFNEHEVSAKLDWNLGQTLGTKVHALQERIGISWIDGQFLSESLKVLNEGRTVLKWSFAVAYYSDASHNLTKIFVDNQMLLANAVESLSELLQIKTPEVIMKRRPEFYNKAGYVENRTTALMECGRELLCKGICKAAE.

The tract at residues 175–388 (NDFTCIICCD…KNFFQCTMYK (214 aa)) is TRIAD supradomain. Residues Cys-179, Cys-182, Cys-200, Cys-203, Cys-301, Cys-304, His-309, Cys-314, Cys-341, and Cys-344 each contribute to the Zn(2+) site. An RING-type 1 zinc finger spans residues 179–225 (CIICCDKKDTETFALECGHEYCINCYRHYIKDKLHEGNIITCMDCSL). The IBR-type zinc-finger motif lies at 242-314 (SKLMDSSIKS…GFEVHSPADC (73 aa)). An RING-type 2; atypical zinc finger spans residues 341–370 (CPKCSVNIEKNGGCNHMVCSSCKYEFCWIC). Cys-354 is an active-site residue. Residues Cys-359, Cys-362, Cys-367, Cys-370, His-377, and Cys-384 each coordinate Zn(2+).

This sequence belongs to the RBR family. As to quaternary structure, interacts with the E2 ubiquitin-conjugating enzyme UBC4 and histones H3 and H4.

It catalyses the reaction [E2 ubiquitin-conjugating enzyme]-S-ubiquitinyl-L-cysteine + [acceptor protein]-L-lysine = [E2 ubiquitin-conjugating enzyme]-L-cysteine + [acceptor protein]-N(6)-ubiquitinyl-L-lysine.. It functions in the pathway protein modification; protein ubiquitination. Its function is as follows. Probable ubiquitin-protein ligase involved in the degradation-related ubiquitination of histones. Contributes to the post-translational regulation of histone protein levels by polyubiquitination of excess histones for subsequent degradation. The polypeptide is E3 ubiquitin-protein ligase HEL1 (Saccharomyces cerevisiae (strain ATCC 204508 / S288c) (Baker's yeast)).